The following is a 205-amino-acid chain: MSIMSYNGGAVMAMKGKQCVAIAADRRFGVQAQMVTTDFQKIFPMGDRLYIGLAGLATDVQTVSQRLKFRLNLYELKEGRQIKPKTFMSMVSNLLYERRFGPYYIEPVIAGLDPKTFEPFICSLDLIGCPMVTEDFVVSGTCSEQMYGMCESLWEPDMEPEDLFETISQAMLNAVDRDAVSGMGVVVQVIEKDKITTRTLKARMD.

Belongs to the peptidase T1B family. In terms of assembly, the 26S proteasome consists of a 20S proteasome core and two 19S regulatory subunits. The 20S proteasome core is composed of 28 subunits that are arranged in four stacked rings, resulting in a barrel-shaped structure. The two end rings are each formed by seven alpha subunits, and the two central rings are each formed by seven beta subunits. The catalytic chamber with the active sites is on the inside of the barrel.

The protein localises to the cytoplasm. Its subcellular location is the nucleus. Non-catalytic component of the proteasome, a multicatalytic proteinase complex which is characterized by its ability to cleave peptides with Arg, Phe, Tyr, Leu, and Glu adjacent to the leaving group at neutral or slightly basic pH. The proteasome has an ATP-dependent proteolytic activity. This chain is Proteasome subunit beta type-3 (psmb3), found in Oncorhynchus mykiss (Rainbow trout).